The primary structure comprises 415 residues: Adenylosuccinate synthetase (415 aa).

GTP is bound by residues 11–17 (GDEGKGK) and 39–41 (GHT). The Proton acceptor role is filled by aspartate 12. Aspartate 12 and glycine 39 together coordinate Mg(2+). Residues 12–15 (DEGK), 37–40 (NAGH), threonine 124, arginine 138, glutamine 218, threonine 233, and arginine 297 contribute to the IMP site. The active-site Proton donor is histidine 40. Substrate is bound at residue 293–299 (TTTGRAR). GTP is bound by residues arginine 299, 325–327 (KLD), and 403–405 (STS).

The protein belongs to the adenylosuccinate synthetase family. As to quaternary structure, homodimer. Mg(2+) is required as a cofactor.

It is found in the cytoplasm. It carries out the reaction IMP + L-aspartate + GTP = N(6)-(1,2-dicarboxyethyl)-AMP + GDP + phosphate + 2 H(+). It participates in purine metabolism; AMP biosynthesis via de novo pathway; AMP from IMP: step 1/2. Functionally, plays an important role in the de novo pathway of purine nucleotide biosynthesis. Catalyzes the first committed step in the biosynthesis of AMP from IMP. This chain is Adenylosuccinate synthetase, found in Helicobacter hepaticus (strain ATCC 51449 / 3B1).